We begin with the raw amino-acid sequence, 340 residues long: ATP-dependent 6-phosphofructokinase (340 aa).

Gly11 serves as a coordination point for ATP. Arg21–Arg25 is an ADP binding site. Residues Arg72 to Tyr73 and Gly102 to Ser105 contribute to the ATP site. Mg(2+) is bound at residue Asp103. Substrate is bound at residue Thr125 to Asp127. The active-site Proton acceptor is Asp127. Arg154 provides a ligand contact to ADP. Residues Arg162 and Met169–Arg171 each bind substrate. ADP is bound by residues Gly185–Asp187 and Lys213–His215. Substrate is bound by residues Glu222, Arg244, and His250–Arg253.

The protein belongs to the phosphofructokinase type A (PFKA) family. ATP-dependent PFK group I subfamily. Prokaryotic clade 'B1' sub-subfamily. Homotetramer. The cofactor is Mg(2+).

The protein localises to the cytoplasm. It catalyses the reaction beta-D-fructose 6-phosphate + ATP = beta-D-fructose 1,6-bisphosphate + ADP + H(+). Its pathway is carbohydrate degradation; glycolysis; D-glyceraldehyde 3-phosphate and glycerone phosphate from D-glucose: step 3/4. Its activity is regulated as follows. Allosterically activated by ADP and other diphosphonucleosides, and allosterically inhibited by phosphoenolpyruvate. Its function is as follows. Catalyzes the phosphorylation of D-fructose 6-phosphate to fructose 1,6-bisphosphate by ATP, the first committing step of glycolysis. The sequence is that of ATP-dependent 6-phosphofructokinase from Streptococcus agalactiae serotype Ia (strain ATCC 27591 / A909 / CDC SS700).